A 270-amino-acid polypeptide reads, in one-letter code: Protein N-terminal and lysine N-methyltransferase EFM7 (270 aa).

The interval 1–45 is disordered; sequence MSDIESLNGGDLFAEPSDFYKPPPEPHFATYTRDDVPESSTSQQK. Residues Trp63, 89-91, Asp111, Trp158, and Ser182 contribute to the S-adenosyl-L-methionine site; that span reads GAA.

It belongs to the class I-like SAM-binding methyltransferase superfamily. EFM7 family.

The protein localises to the cytoplasm. S-adenosyl-L-methionine-dependent protein methyltransferase that trimethylates the N-terminal glycine 'Gly-2' of elongation factor 1-alpha, before also catalyzing the mono- and dimethylation of 'Lys-3'. The chain is Protein N-terminal and lysine N-methyltransferase EFM7 from Kluyveromyces lactis (strain ATCC 8585 / CBS 2359 / DSM 70799 / NBRC 1267 / NRRL Y-1140 / WM37) (Yeast).